Consider the following 270-residue polypeptide: Cytochrome c oxidase subunit 3 (270 aa).

The next 7 helical transmembrane spans lie at 21–41 (PWPF…VLYF), 46–66 (GSLV…FVWW), 90–110 (GIML…WAFF), 131–151 (FFSP…SGCA), 167–187 (AIFS…FQIY), 205–225 (FFMI…FLFV), and 248–268 (WYWH…YWWG).

It belongs to the cytochrome c oxidase subunit 3 family. In terms of assembly, component of the cytochrome c oxidase (complex IV, CIV), a multisubunit enzyme composed of a catalytic core of 3 subunits and several supernumerary subunits. The complex exists as a monomer or a dimer and forms supercomplexes (SCs) in the inner mitochondrial membrane with ubiquinol-cytochrome c oxidoreductase (cytochrome b-c1 complex, complex III, CIII).

The protein localises to the mitochondrion inner membrane. It carries out the reaction 4 Fe(II)-[cytochrome c] + O2 + 8 H(+)(in) = 4 Fe(III)-[cytochrome c] + 2 H2O + 4 H(+)(out). Its function is as follows. Component of the cytochrome c oxidase, the last enzyme in the mitochondrial electron transport chain which drives oxidative phosphorylation. The respiratory chain contains 3 multisubunit complexes succinate dehydrogenase (complex II, CII), ubiquinol-cytochrome c oxidoreductase (cytochrome b-c1 complex, complex III, CIII) and cytochrome c oxidase (complex IV, CIV), that cooperate to transfer electrons derived from NADH and succinate to molecular oxygen, creating an electrochemical gradient over the inner membrane that drives transmembrane transport and the ATP synthase. Cytochrome c oxidase is the component of the respiratory chain that catalyzes the reduction of oxygen to water. Electrons originating from reduced cytochrome c in the intermembrane space (IMS) are transferred via the dinuclear copper A center (CU(A)) of subunit 2 and heme A of subunit 1 to the active site in subunit 1, a binuclear center (BNC) formed by heme A3 and copper B (CU(B)). The BNC reduces molecular oxygen to 2 water molecules using 4 electrons from cytochrome c in the IMS and 4 protons from the mitochondrial matrix. In Cyanidium caldarium (Red alga), this protein is Cytochrome c oxidase subunit 3 (COX3).